Reading from the N-terminus, the 450-residue chain is Tubulin beta chain (450 aa).

GTP is bound by residues Glu-69, Ser-138, Gly-142, Thr-143, Gly-144, Asn-204, and Asn-226. Glu-69 provides a ligand contact to Mg(2+). The tract at residues 427–450 is disordered; sequence DATIDQEFEDEEEVEEQNDDSDEQ. Positions 430–450 are enriched in acidic residues; that stretch reads IDQEFEDEEEVEEQNDDSDEQ.

The protein belongs to the tubulin family. Dimer of alpha and beta chains. A typical microtubule is a hollow water-filled tube with an outer diameter of 25 nm and an inner diameter of 15 nM. Alpha-beta heterodimers associate head-to-tail to form protofilaments running lengthwise along the microtubule wall with the beta-tubulin subunit facing the microtubule plus end conferring a structural polarity. Microtubules usually have 13 protofilaments but different protofilament numbers can be found in some organisms and specialized cells. Requires Mg(2+) as cofactor.

Its subcellular location is the cytoplasm. The protein localises to the cytoskeleton. In terms of biological role, tubulin is the major constituent of microtubules, a cylinder consisting of laterally associated linear protofilaments composed of alpha- and beta-tubulin heterodimers. Microtubules grow by the addition of GTP-tubulin dimers to the microtubule end, where a stabilizing cap forms. Below the cap, tubulin dimers are in GDP-bound state, owing to GTPase activity of alpha-tubulin. This chain is Tubulin beta chain, found in Bombyx mori (Silk moth).